The sequence spans 428 residues: Pyruvate kinase (428 aa).

Substrate is bound at residue Arg-34. 4 residues coordinate K(+): Asn-36, Ser-38, Asp-68, and Thr-69. Residue 36 to 39 (NFSH) participates in ATP binding. ATP-binding residues include Arg-75 and Lys-152. Glu-214 is a Mg(2+) binding site. Residues Gly-237, Asp-238, and Thr-270 each contribute to the substrate site. Asp-238 lines the Mg(2+) pocket.

It belongs to the pyruvate kinase family. In terms of assembly, homotetramer. Mg(2+) serves as cofactor. K(+) is required as a cofactor.

The enzyme catalyses pyruvate + ATP = phosphoenolpyruvate + ADP + H(+). It participates in carbohydrate degradation; glycolysis; pyruvate from D-glyceraldehyde 3-phosphate: step 5/5. This is Pyruvate kinase (PYK1) from Encephalitozoon cuniculi (strain GB-M1) (Microsporidian parasite).